Here is a 418-residue protein sequence, read N- to C-terminus: Gamma-glutamyl phosphate reductase (418 aa).

The protein belongs to the gamma-glutamyl phosphate reductase family.

The protein resides in the cytoplasm. The enzyme catalyses L-glutamate 5-semialdehyde + phosphate + NADP(+) = L-glutamyl 5-phosphate + NADPH + H(+). The protein operates within amino-acid biosynthesis; L-proline biosynthesis; L-glutamate 5-semialdehyde from L-glutamate: step 2/2. In terms of biological role, catalyzes the NADPH-dependent reduction of L-glutamate 5-phosphate into L-glutamate 5-semialdehyde and phosphate. The product spontaneously undergoes cyclization to form 1-pyrroline-5-carboxylate. The sequence is that of Gamma-glutamyl phosphate reductase from Geotalea daltonii (strain DSM 22248 / JCM 15807 / FRC-32) (Geobacter daltonii).